Reading from the N-terminus, the 110-residue chain is Defensin-like protein 296 (110 aa).

The first 28 residues, 1–28 (MASKITIFFVLALVVVCTMMVCIPTATA), serve as a signal peptide directing secretion. Disulfide bonds link Cys-34/Cys-52, Cys-40/Cys-57, Cys-45/Cys-59, Cys-81/Cys-102, Cys-87/Cys-107, and Cys-95/Cys-109.

The protein belongs to the DEFL family.

The protein localises to the secreted. In Arabidopsis thaliana (Mouse-ear cress), this protein is Defensin-like protein 296.